Here is a 274-residue protein sequence, read N- to C-terminus: Large ribosomal subunit protein uL2 (274 aa).

Disordered regions lie at residues 28–53 (APYA…TVRH) and 223–274 (VAMN…RRNK). The segment covering 39–48 (KSGGRNNNGR) has biased composition (low complexity).

The protein belongs to the universal ribosomal protein uL2 family. As to quaternary structure, part of the 50S ribosomal subunit. Forms a bridge to the 30S subunit in the 70S ribosome.

Its function is as follows. One of the primary rRNA binding proteins. Required for association of the 30S and 50S subunits to form the 70S ribosome, for tRNA binding and peptide bond formation. It has been suggested to have peptidyltransferase activity; this is somewhat controversial. Makes several contacts with the 16S rRNA in the 70S ribosome. The chain is Large ribosomal subunit protein uL2 from Pseudoalteromonas atlantica (strain T6c / ATCC BAA-1087).